A 296-amino-acid chain; its full sequence is Probable porphobilinogen deaminase (296 aa).

An S-(dipyrrolylmethanemethyl)cysteine modification is found at C241.

Belongs to the HMBS family. The cofactor is dipyrromethane.

The enzyme catalyses 4 porphobilinogen + H2O = hydroxymethylbilane + 4 NH4(+). The protein operates within porphyrin-containing compound metabolism; protoporphyrin-IX biosynthesis; coproporphyrinogen-III from 5-aminolevulinate: step 2/4. Tetrapolymerization of the monopyrrole PBG into the hydroxymethylbilane pre-uroporphyrinogen in several discrete steps. This chain is Probable porphobilinogen deaminase, found in Pyrobaculum neutrophilum (strain DSM 2338 / JCM 9278 / NBRC 100436 / V24Sta) (Thermoproteus neutrophilus).